The chain runs to 147 residues: Proteinase inhibitor type-2 (147 aa).

Positions 1–25 are cleaved as a signal peptide; that stretch reads MAVHKEVSFVAYLLIVLGMFLYVDA. Tandem repeats lie at residues 25–81 and 82–141. Cystine bridges form between Cys28–Cys116, Cys32–Cys112, Cys40–Cys122, Cys52–Cys89, Cys55–Cys73, Cys56–Cys85, Cys62–Cys98, and Cys115–Cys133.

It belongs to the protease inhibitor I20 (potato type II proteinase inhibitor) family.

The protein is Proteinase inhibitor type-2 of Solanum tuberosum (Potato).